Reading from the N-terminus, the 448-residue chain is uncharacterized protein (448 aa).

The uDENN domain occupies 4–155 (QAIVLATFDA…SAVNLEFDSL (152 aa)). The 144-residue stretch at 183-326 (LDHLGPAFYC…FKGLSRYLSF (144 aa)) folds into the cDENN domain. The region spanning 328–428 (GESSWGLTTY…WQYGKYFWLR (101 aa)) is the dDENN domain. A helical membrane pass occupies residues 425–447 (FWLRRVSLIFLASTCFLFILWKL).

It is found in the golgi apparatus membrane. The protein localises to the endoplasmic reticulum membrane. This is an uncharacterized protein from Schizosaccharomyces pombe (strain 972 / ATCC 24843) (Fission yeast).